The chain runs to 1434 residues: MASAGNAAGALGRQAGGGRRRRTGGPHRAAPDRDYLHRPSYCDAAFALEQISKGKATGRKAPLWLRAKFQRLLFKLGCYIQKNCGKFLVVGLLIFGAFAVGLKAANLETNVEELWVEVGGRVSRELNYTRQKIGEEAMFNPQLMIQTPKEEGANVLTTEALLQHLDSALQASRVHVYMYNRQWKLEHLCYKSGELITETGYMDQIIEYLYPCLIITPLDCFWEGAKLQSGTAYLLGKPPLRWTNFDPLEFLEELKKINYQVDSWEEMLNKAEVGHGYMDRPCLNPADPDCPATAPNKNSTKPLDVALVLNGGCQGLSRKYMHWQEELIVGGTVKNATGKLVSAHALQTMFQLMTPKQMYEHFRGYDYVSHINWNEDRAAAILEAWQRTYVEVVHQSVAPNSTQKVLPFTTTTLDDILKSFSDVSVIRVASGYLLMLAYACLTMLRWDCSKSQGAVGLAGVLLVALSVAAGLGLCSLIGISFNAATTQVLPFLALGVGVDDVFLLAHAFSETGQNKRIPFEDRTGECLKRTGASVALTSISNVTAFFMAALIPIPALRAFSLQAAVVVVFNFAMVLLIFPAILSMDLYRREDRRLDIFCCFTSPCVSRVIQVEPQAYTEPHSNTRYSPPPPYTSHSFAHETHITMQSTVQLRTEYDPHTHVYYTTAEPRSEISVQPVTVTQDNLSCQSPESTSSTRDLLSQFSDSSLHCLEPPCTKWTLSSFAEKHYAPFLLKPKAKVVVILLFLGLLGVSLYGTTRVRDGLDLTDIVPRETREYDFIAAQFKYFSFYNMYIVTQKADYPNIQHLLYDLHKSFSNVKYVMLEENKQLPQMWLHYFRDWLQGLQDAFDSDWETGRIMPNNYKNGSDDGVLAYKLLVQTGSRDKPIDISQLTKQRLVDADGIINPSAFYIYLTAWVSNDPVAYAASQANIRPHRPEWVHDKADYMPETRLRIPAAEPIEYAQFPFYLNGLRDTSDFVEAIEKVRVICNNYTSLGLSSYPNGYPFLFWEQYISLRHWLLLSISVVLACTFLVCAVFLLNPWTAGIIVMVLALMTVELFGMMGLIGIKLSAVPVVILIASVGIGVEFTVHVALAFLTAIGDKNHRAMLALEHMFAPVLDGAVSTLLGVLMLAGSEFDFIVRYFFAVLAILTVLGVLNGLVLLPVLLSFFGPCPEVSPANGLNRLPTPSPEPPPSVVRFAVPPGHTNNGSDSSDSEYSSQTTVSGISEELRQYEAQQGAGGPAHQVIVEATENPVFARSTVVHPDSRHQPPLTPRQQPHLDSGSLSPGRQGQQPRRDPPREGLRPPPYRPRRDAFEISTEGHSGPSNRDRSGPRGARSHNPRNPTSTAMGSSVPSYCQPITTVTASASVTVAVHPPPGPGRNPRGGPCPGYESYPETDHGVFEDPHVPFHVRCERRDSKVEVIELQDVECEERPWGSSSN.

Residues 1-13 are compositionally biased toward low complexity; the sequence is MASAGNAAGALGR. The interval 1–34 is disordered; that stretch reads MASAGNAAGALGRQAGGGRRRRTGGPHRAAPDRD. At 1 to 86 the chain is on the cytoplasmic side; it reads MASAGNAAGA…GCYIQKNCGK (86 aa). Residues 87–107 form a helical membrane-spanning segment; that stretch reads FLVVGLLIFGAFAVGLKAANL. Over 108 to 422 the chain is Extracellular; that stretch reads ETNVEELWVE…LDDILKSFSD (315 aa). Residues N127, N298, N335, and N400 are each glycosylated (N-linked (GlcNAc...) asparagine). Residues 423-443 form a helical membrane-spanning segment; the sequence is VSVIRVASGYLLMLAYACLTM. Positions 424-584 constitute an SSD domain; sequence SVIRVASGYL…LLIFPAILSM (161 aa). Topologically, residues 444-458 are cytoplasmic; sequence LRWDCSKSQGAVGLA. A helical membrane pass occupies residues 459–479; that stretch reads GVLLVALSVAAGLGLCSLIGI. The Extracellular segment spans residues 480–487; it reads SFNAATTQ. A helical membrane pass occupies residues 488–508; the sequence is VLPFLALGVGVDDVFLLAHAF. Topologically, residues 509 to 533 are cytoplasmic; the sequence is SETGQNKRIPFEDRTGECLKRTGAS. A helical transmembrane segment spans residues 534–554; sequence VALTSISNVTAFFMAALIPIP. At 555-563 the chain is on the extracellular side; sequence ALRAFSLQA. A helical membrane pass occupies residues 564-584; that stretch reads AVVVVFNFAMVLLIFPAILSM. Residues 585-734 lie on the Cytoplasmic side of the membrane; sequence DLYRREDRRL…HYAPFLLKPK (150 aa). The chain crosses the membrane as a helical span at residues 735 to 755; sequence AKVVVILLFLGLLGVSLYGTT. Residues 756–1013 are Extracellular-facing; it reads RVRDGLDLTD…WEQYISLRHW (258 aa). 2 N-linked (GlcNAc...) asparagine glycosylation sites follow: N861 and N986. Residues 1014–1034 form a helical membrane-spanning segment; it reads LLLSISVVLACTFLVCAVFLL. Residues 1035–1039 are Cytoplasmic-facing; it reads NPWTA. A helical membrane pass occupies residues 1040-1060; it reads GIIVMVLALMTVELFGMMGLI. Topologically, residues 1061–1069 are extracellular; it reads GIKLSAVPV. The helical transmembrane segment at 1070-1090 threads the bilayer; it reads VILIASVGIGVEFTVHVALAF. The Cytoplasmic portion of the chain corresponds to 1091–1107; that stretch reads LTAIGDKNHRAMLALEH. Residues 1108–1128 form a helical membrane-spanning segment; that stretch reads MFAPVLDGAVSTLLGVLMLAG. At 1129–1140 the chain is on the extracellular side; sequence SEFDFIVRYFFA. A helical transmembrane segment spans residues 1141–1161; the sequence is VLAILTVLGVLNGLVLLPVLL. Topologically, residues 1162 to 1434 are cytoplasmic; it reads SFFGPCPEVS…EERPWGSSSN (273 aa). 3 disordered regions span residues 1175 to 1219, 1257 to 1348, and 1368 to 1396; these read GLNR…TVSG, HPDS…SSVP, and HPPP…HGVF. The residue at position 1181 (T1181) is a Phosphothreonine. S1183 is modified (phosphoserine). Residues 1204–1213 show a composition bias toward low complexity; that stretch reads SDSSDSEYSS. Positions 1288 to 1297 are enriched in basic and acidic residues; the sequence is PRRDPPREGL. The segment covering 1335 to 1348 has biased composition (polar residues); that stretch reads PRNPTSTAMGSSVP. K1413 is covalently cross-linked (Glycyl lysine isopeptide (Lys-Gly) (interchain with G-Cter in ubiquitin)).

This sequence belongs to the patched family. Interacts with SNX17. Interacts with IHH. Interacts with G-protein coupled receptor GPR37L1. In terms of processing, glycosylation is necessary for SHH binding. In the absence of Hh ligands, ubiquitination by ITCH at Lys-1413 promotes endocytosis and both proteasomal and lysosomal degradation. In terms of tissue distribution, detected in cerebellar Bergmann glia cells (at protein level). In the developing embryo, first detected within the ventral neural tube and later in the somites and limb buds. Expression in the limb buds is restricted to the posterior ectoderm surrounding the zone of polarizing activity. In the adult, expression is seen in brain, lung, liver, kidney and ocular tissues; lower levels in heart, skeletal muscle, and testis.

It is found in the cell membrane. Functionally, acts as a receptor for sonic hedgehog (SHH), indian hedgehog (IHH) and desert hedgehog (DHH). Associates with the smoothened protein (SMO) to transduce the hedgehog's proteins signal. Seems to have a tumor suppressor function, as inactivation of this protein is probably a necessary, if not sufficient step for tumorigenesis. This is Protein patched homolog 1 (Ptch1) from Mus musculus (Mouse).